We begin with the raw amino-acid sequence, 496 residues long: Cytochrome P450 71D18 (496 aa).

Residues glutamate 2–isoleucine 22 traverse the membrane as a helical; Signal-anchor for type II membrane protein segment. Cysteine 436 contributes to the heme binding site.

The protein belongs to the cytochrome P450 family. The cofactor is heme.

The protein resides in the endoplasmic reticulum membrane. It carries out the reaction (4S)-limonene + reduced [NADPH--hemoprotein reductase] + O2 = (1S,5R)-carveol + oxidized [NADPH--hemoprotein reductase] + H2O + H(+). Its function is as follows. Hydroxylates (-)-(4S)-limonene to (-)-trans-carveol, a precursor of (-)-carvone. Fluorinated substrate analogs are hydroxylated with the same regio- and stereochemistry. The protein is Cytochrome P450 71D18 (CYP71D18) of Mentha gracilis (Gingermint).